The chain runs to 88 residues: MRLILSLPVLAVVLAMVLEGPAPAQAAPDMSSTLESIPGKLKEFGSTVKEKFRTAIDQIQKSDFPEKTRNWFSDVFQKVKEKFETTFS.

Positions 1 to 26 (MRLILSLPVLAVVLAMVLEGPAPAQA) are cleaved as a signal peptide.

This sequence belongs to the apolipoprotein C1 family.

The protein localises to the secreted. Inhibitor of lipoprotein binding to the low density lipoprotein (LDL) receptor, LDL receptor-related protein, and very low density lipoprotein (VLDL) receptor. Associates with high density lipoproteins (HDL) and the triacylglycerol-rich lipoproteins in the plasma and makes up about 10% of the protein of the VLDL and 2% of that of HDL. Appears to interfere directly with fatty acid uptake and is also the major plasma inhibitor of cholesteryl ester transfer protein (CETP). Binds free fatty acids and reduces their intracellular esterification. Modulates the interaction of APOE with beta-migrating VLDL and inhibits binding of beta-VLDL to the LDL receptor-related protein. This is Apolipoprotein C-I (APOC1) from Cynopterus brachyotis (Lesser short-nosed fruit bat).